A 179-amino-acid polypeptide reads, in one-letter code: MIISEANRKEICKYLFKEGVCFAKKDFNLAKHPLIDVPNLQVIKLMQSFKSKEYVRETFAWMHYYWFLTNEGIEFLRTYLNLPSDVVPATLKKSAKPGGRPFGGPPGDRSRGPRHEGGDRPRFGDRDGYRAGPRAGGEFGGEKGGAPADYQPSFQGSGRGFGRGAGGYSAAAPSGSGLP.

Positions 90 to 179 are disordered; it reads TLKKSAKPGG…AAAPSGSGLP (90 aa). Residues 108 to 129 show a composition bias toward basic and acidic residues; it reads DRSRGPRHEGGDRPRFGDRDGY. Positions 134 to 144 are enriched in gly residues; that stretch reads RAGGEFGGEKG. The span at 145-156 shows a compositional bias: low complexity; that stretch reads GAPADYQPSFQG. Positions 157-167 are enriched in gly residues; it reads SGRGFGRGAGG. The segment covering 168–179 has biased composition (low complexity); it reads YSAAAPSGSGLP.

Belongs to the eukaryotic ribosomal protein eS10 family.

The protein localises to the cytoplasm. The protein is Small ribosomal subunit protein eS10x (RPS10C) of Arabidopsis thaliana (Mouse-ear cress).